A 121-amino-acid polypeptide reads, in one-letter code: MSRARSGKVNKNRHKKILKLAKGYRGRAKNCFRIAIQKVEKALQYSYRDRRNRKRQFRALWIQRINAAVRQYDMTYSQFINGLKQANITVDRKVMANLAVHNADSFVHLVELTKKSLAKTA.

Belongs to the bacterial ribosomal protein bL20 family.

In terms of biological role, binds directly to 23S ribosomal RNA and is necessary for the in vitro assembly process of the 50S ribosomal subunit. It is not involved in the protein synthesizing functions of that subunit. This is Large ribosomal subunit protein bL20 from Orientia tsutsugamushi (strain Boryong) (Rickettsia tsutsugamushi).